A 264-amino-acid polypeptide reads, in one-letter code: Thymidylate synthase (264 aa).

Arg-21 lines the dUMP pocket. Residue His-51 coordinates (6R)-5,10-methylene-5,6,7,8-tetrahydrofolate. 126-127 (RR) serves as a coordination point for dUMP. Cys-146 functions as the Nucleophile in the catalytic mechanism. Residues 166-169 (RSGD), Asn-177, and 207-209 (HLY) each bind dUMP. Residue Asp-169 participates in (6R)-5,10-methylene-5,6,7,8-tetrahydrofolate binding. Ala-263 provides a ligand contact to (6R)-5,10-methylene-5,6,7,8-tetrahydrofolate.

Belongs to the thymidylate synthase family. Bacterial-type ThyA subfamily. In terms of assembly, homodimer.

It localises to the cytoplasm. The enzyme catalyses dUMP + (6R)-5,10-methylene-5,6,7,8-tetrahydrofolate = 7,8-dihydrofolate + dTMP. The protein operates within pyrimidine metabolism; dTTP biosynthesis. Functionally, catalyzes the reductive methylation of 2'-deoxyuridine-5'-monophosphate (dUMP) to 2'-deoxythymidine-5'-monophosphate (dTMP) while utilizing 5,10-methylenetetrahydrofolate (mTHF) as the methyl donor and reductant in the reaction, yielding dihydrofolate (DHF) as a by-product. This enzymatic reaction provides an intracellular de novo source of dTMP, an essential precursor for DNA biosynthesis. The polypeptide is Thymidylate synthase (Xanthomonas oryzae pv. oryzae (strain MAFF 311018)).